Here is a 500-residue protein sequence, read N- to C-terminus: MELLAGTGLWPMAIFTVIFILLVDLMHRRQRWTSRYPPGPVPWPVLGNLLQVDLCNMPYSMYKLQNRYGDVFSLQMGWKPVVVINGLKAVQELLVTCGEDTADRPEMPIFQHIGYGHKAKGVVLAPYGPEWREQRRFSVSTLRNFGVGKKSLEQWVTDEASHLCDALTAEAGRPLDPYTLLNKAVCNVIASLIYARRFDYGDPDFIKVLKILKESMGEQTGLFPEVLNMFPVLLRIPGLADKVFPGQKTFLTMVDNLVTEHKKTWDPDQPPRDLTDAFLAEIEKAKGNPESSFNDANLRLVVNDLFGAGMVTTSITLTWALLLMILHPDVQCRVQQEIDEVIGQVRHPEMADQAHMPFTNAVIHEVQRFADIVPMNLPHKTSRDIEVQGFLIPKGTTLIPNLSSVLKDETVWEKPLRFHPEHFLDAQGNFVKHEAFMPFSAGRRACLGEPLARMELFLFFTCLLQRFSFSVPTGQPRPSDYGVFAFLLSPSPYQLCAFKR.

C446 contributes to the heme binding site.

It belongs to the cytochrome P450 family. Heme is required as a cofactor.

The protein resides in the endoplasmic reticulum membrane. It localises to the microsome membrane. The enzyme catalyses an organic molecule + reduced [NADPH--hemoprotein reductase] + O2 = an alcohol + oxidized [NADPH--hemoprotein reductase] + H2O + H(+). Cytochromes P450 are a group of heme-thiolate monooxygenases. In liver microsomes, this enzyme is involved in an NADPH-dependent electron transport pathway. It oxidizes a variety of structurally unrelated compounds, including steroids, fatty acids, and xenobiotics. This Rattus norvegicus (Rat) protein is Cytochrome P450 2D3 (Cyp2d3).